The sequence spans 199 residues: dITP/XTP pyrophosphatase (199 aa).

8–13 (TRNKGK) is a substrate binding site. Mg(2+)-binding residues include Glu-41 and Asp-70. Asp-70 serves as the catalytic Proton acceptor. Residues Ser-71, 153–156 (FGYD), Lys-176, and 181–182 (HR) each bind substrate.

Belongs to the HAM1 NTPase family. In terms of assembly, homodimer. Requires Mg(2+) as cofactor.

The enzyme catalyses XTP + H2O = XMP + diphosphate + H(+). It catalyses the reaction dITP + H2O = dIMP + diphosphate + H(+). The catalysed reaction is ITP + H2O = IMP + diphosphate + H(+). Its function is as follows. Pyrophosphatase that catalyzes the hydrolysis of nucleoside triphosphates to their monophosphate derivatives, with a high preference for the non-canonical purine nucleotides XTP (xanthosine triphosphate), dITP (deoxyinosine triphosphate) and ITP. Seems to function as a house-cleaning enzyme that removes non-canonical purine nucleotides from the nucleotide pool, thus preventing their incorporation into DNA/RNA and avoiding chromosomal lesions. In Geobacter sulfurreducens (strain ATCC 51573 / DSM 12127 / PCA), this protein is dITP/XTP pyrophosphatase.